An 87-amino-acid chain; its full sequence is U3-theraphotoxin-Hhn1g (87 aa).

The N-terminal stretch at 1-24 is a signal peptide; the sequence is MVNMKASMFLTFAGLVLLFVVCFA. Residues 25-52 constitute a propeptide that is removed on maturation; the sequence is SESEEKEFPKEMLSSIFAVDNDFKQEER. Cystine bridges form between C54–C67, C61–C72, and C66–C79.

The protein belongs to the neurotoxin 10 (Hwtx-1) family. 51 (Hntx-8) subfamily. Hntx-8 sub-subfamily. As to expression, expressed by the venom gland.

Its subcellular location is the secreted. Its function is as follows. Ion channel inhibitor. In Cyriopagopus hainanus (Chinese bird spider), this protein is U3-theraphotoxin-Hhn1g.